Consider the following 254-residue polypeptide: 4-hydroxy-tetrahydrodipicolinate reductase (254 aa).

NAD(+) is bound by residues 10–15 (GATGKV) and 101–103 (GTT). Residue H157 is the Proton donor/acceptor of the active site. A (S)-2,3,4,5-tetrahydrodipicolinate-binding site is contributed by H158. K161 functions as the Proton donor in the catalytic mechanism. Residue 167–168 (GT) participates in (S)-2,3,4,5-tetrahydrodipicolinate binding.

The protein belongs to the DapB family.

Its subcellular location is the cytoplasm. The catalysed reaction is (S)-2,3,4,5-tetrahydrodipicolinate + NAD(+) + H2O = (2S,4S)-4-hydroxy-2,3,4,5-tetrahydrodipicolinate + NADH + H(+). It catalyses the reaction (S)-2,3,4,5-tetrahydrodipicolinate + NADP(+) + H2O = (2S,4S)-4-hydroxy-2,3,4,5-tetrahydrodipicolinate + NADPH + H(+). It functions in the pathway amino-acid biosynthesis; L-lysine biosynthesis via DAP pathway; (S)-tetrahydrodipicolinate from L-aspartate: step 4/4. Catalyzes the conversion of 4-hydroxy-tetrahydrodipicolinate (HTPA) to tetrahydrodipicolinate. The sequence is that of 4-hydroxy-tetrahydrodipicolinate reductase from Symbiobacterium thermophilum (strain DSM 24528 / JCM 14929 / IAM 14863 / T).